Consider the following 120-residue polypeptide: MAAHQNLILKIFCLCCRDCQEPYAINDSKVPSQTQEHKPSTQNLLLQKDELDRQNPKRINAVSHLPSRTPLIQTKKSTSSSSSEFEDLNAYASQRNFYKRNLNRYCQEHWPFQPCLTGRP.

The segment covering 29–45 (KVPSQTQEHKPSTQNLL) has biased composition (polar residues). A disordered region spans residues 29-86 (KVPSQTQEHKPSTQNLLLQKDELDRQNPKRINAVSHLPSRTPLIQTKKSTSSSSSEFE). Residues 74 to 83 (TKKSTSSSSS) are compositionally biased toward low complexity.

This chain is Testis-expressed protein 48, found in Homo sapiens (Human).